Here is a 290-residue protein sequence, read N- to C-terminus: Elongation factor Ts (290 aa).

An involved in Mg(2+) ion dislocation from EF-Tu region spans residues 80 to 83 (TDFV).

The protein belongs to the EF-Ts family.

Its subcellular location is the cytoplasm. Functionally, associates with the EF-Tu.GDP complex and induces the exchange of GDP to GTP. It remains bound to the aminoacyl-tRNA.EF-Tu.GTP complex up to the GTP hydrolysis stage on the ribosome. This is Elongation factor Ts from Neorickettsia sennetsu (strain ATCC VR-367 / Miyayama) (Ehrlichia sennetsu).